Here is a 1079-residue protein sequence, read N- to C-terminus: Zn(2)-C6 fungal-type transcription factor FTF1a (1079 aa).

The zn(2)-C6 fungal-type DNA-binding region spans 177–204; that stretch reads CIACRRKKIRCSGEKPACKQCLHSCIPC.

It localises to the nucleus. In terms of biological role, zn(2)-C6 fungal-type transcription factor that has a role in the establishment of the fungus within the plant and/or the progress of the disease. Regulates the expression of virulence factors such as SIX1 and SIX6. The chain is Zn(2)-C6 fungal-type transcription factor FTF1a from Fusarium oxysporum f. sp. lycopersici (strain 4287 / CBS 123668 / FGSC 9935 / NRRL 34936) (Fusarium vascular wilt of tomato).